The sequence spans 571 residues: Proline--tRNA ligase (571 aa).

It belongs to the class-II aminoacyl-tRNA synthetase family. ProS type 1 subfamily. In terms of assembly, homodimer.

It is found in the cytoplasm. It catalyses the reaction tRNA(Pro) + L-proline + ATP = L-prolyl-tRNA(Pro) + AMP + diphosphate. Its function is as follows. Catalyzes the attachment of proline to tRNA(Pro) in a two-step reaction: proline is first activated by ATP to form Pro-AMP and then transferred to the acceptor end of tRNA(Pro). As ProRS can inadvertently accommodate and process non-cognate amino acids such as alanine and cysteine, to avoid such errors it has two additional distinct editing activities against alanine. One activity is designated as 'pretransfer' editing and involves the tRNA(Pro)-independent hydrolysis of activated Ala-AMP. The other activity is designated 'posttransfer' editing and involves deacylation of mischarged Ala-tRNA(Pro). The misacylated Cys-tRNA(Pro) is not edited by ProRS. This Mannheimia succiniciproducens (strain KCTC 0769BP / MBEL55E) protein is Proline--tRNA ligase.